We begin with the raw amino-acid sequence, 157 residues long: Putative glutathione-dependent formaldehyde-activating enzyme (157 aa).

The CENP-V/GFA domain maps to 3–134 (LEGSCHCGAV…WVEIESREQD (132 aa)). The Zn(2+) site is built by C7, C9, C27, C29, C32, C79, and C82.

The protein belongs to the Gfa family. It depends on Zn(2+) as a cofactor.

It carries out the reaction S-(hydroxymethyl)glutathione = glutathione + formaldehyde. Its pathway is one-carbon metabolism; formaldehyde degradation; formate from formaldehyde (glutathione route): step 1/3. In terms of biological role, catalyzes the condensation of formaldehyde and glutathione to S-hydroxymethylglutathione. The sequence is that of Putative glutathione-dependent formaldehyde-activating enzyme from Halomonas elongata (strain ATCC 33173 / DSM 2581 / NBRC 15536 / NCIMB 2198 / 1H9).